The chain runs to 20 residues: Magnificalysin I (20 aa).

Residues 1 to 10 are plays an important role in the hemolytic activity; the sequence is ALAGTIIAGA. The tract at residues 9–20 is N-terminal region; that stretch reads GASLTFKILDEV.

Belongs to the actinoporin family. Sea anemone subfamily. Octamer or nonamer in membranes. Monomer in the soluble state.

The protein resides in the secreted. The protein localises to the nematocyst. Its subcellular location is the target cell membrane. Its function is as follows. Pore-forming protein that forms cations-selective hydrophilic pores of around 1 nm and causes cytolysis. Pore formation is a multi-step process that involves specific recognition of membrane sphingomyelin (but neither cholesterol nor phosphatidylcholine) using aromatic rich region and adjacent phosphocholine (POC) binding site, firm binding to the membrane (mainly driven by hydrophobic interactions) accompanied by the transfer of the N-terminal region to the lipid-water interface and finally pore formation after oligomerization of monomers. The chain is Magnificalysin I from Heteractis magnifica (Magnificent sea anemone).